Reading from the N-terminus, the 399-residue chain is Dihydrolipoyllysine-residue succinyltransferase component of 2-oxoglutarate dehydrogenase complex (399 aa).

The 76-residue stretch at 2-77 folds into the Lipoyl-binding domain; sequence AIDIKAPTFP…LSGELLGKLT (76 aa). Lysine 43 is modified (N6-lipoyllysine). The region spanning 104–141 is the Peripheral subunit-binding (PSBD) domain; it reads ILSPAARKIAEENAIAADSITGTGKGGRVTKEDAVAAA. Active-site residues include histidine 370 and aspartate 374.

It belongs to the 2-oxoacid dehydrogenase family. As to quaternary structure, forms a 24-polypeptide structural core with octahedral symmetry. Part of the 2-oxoglutarate dehydrogenase (OGDH) complex composed of E1 (2-oxoglutarate dehydrogenase), E2 (dihydrolipoamide succinyltransferase) and E3 (dihydrolipoamide dehydrogenase); the complex contains multiple copies of the three enzymatic components (E1, E2 and E3). The cofactor is (R)-lipoate.

The catalysed reaction is N(6)-[(R)-dihydrolipoyl]-L-lysyl-[protein] + succinyl-CoA = N(6)-[(R)-S(8)-succinyldihydrolipoyl]-L-lysyl-[protein] + CoA. The protein operates within amino-acid degradation; L-lysine degradation via saccharopine pathway; glutaryl-CoA from L-lysine: step 6/6. Its function is as follows. E2 component of the 2-oxoglutarate dehydrogenase (OGDH) complex which catalyzes the second step in the conversion of 2-oxoglutarate to succinyl-CoA and CO(2). The chain is Dihydrolipoyllysine-residue succinyltransferase component of 2-oxoglutarate dehydrogenase complex (sucB) from Azotobacter vinelandii.